The chain runs to 451 residues: MTENEQIFWNRVLELAQSQLKQATYEFFVHDARLLKVDKHIATIYLDQMKELFWEKNLKDVILTAGFEVYNAQISVDYVFEEDLMIEQNQTKINQKPKQQALNSLPTVTSDLNPKYSFENFIQGDENRWAVAASIAVANTPGTTYNPLFIWGGPGLGKTHLLNAIGNSVLLENPNARIKYITAENFINEFVIHIRLDTMDELKEKFRNLDLLLIDDIQSLAKKTLSGTQEEFFNTFNALHNNNKQIVLTSDRTPDHLNDLEDRLVTRFKWGLTVNITPPDFETRVAILTNKIQEYNFIFPQDTIEYLAGQFDSNVRDLEGALKDISLVANFKQIDTITVDIAAEAIRARKQDGPKMTVIPIEEIQTQVGKFYGVTVKEIKATKRTQNIVLARQVAMFLAREMTDNSLPKIGKEFGGRDHSTVLHAYNKIKNMISQDESLRIEIETIKNKIK.

The tract at residues 1–77 (MTENEQIFWN…EVYNAQISVD (77 aa)) is domain I, interacts with DnaA modulators. The segment at 77–110 (DYVFEEDLMIEQNQTKINQKPKQQALNSLPTVTS) is domain II. The domain III, AAA+ region stretch occupies residues 111–329 (DLNPKYSFEN…GALKDISLVA (219 aa)). ATP is bound by residues Gly-155, Gly-157, Lys-158, and Thr-159. Residues 330–451 (NFKQIDTITV…EIETIKNKIK (122 aa)) form a domain IV, binds dsDNA region.

Belongs to the DnaA family. As to quaternary structure, oligomerizes as a right-handed, spiral filament on DNA at oriC.

It is found in the cytoplasm. Functionally, plays an essential role in the initiation and regulation of chromosomal replication. ATP-DnaA binds to the origin of replication (oriC) to initiate formation of the DNA replication initiation complex once per cell cycle. Binds the DnaA box (a 9 base pair repeat at the origin) and separates the double-stranded (ds)DNA. Forms a right-handed helical filament on oriC DNA; dsDNA binds to the exterior of the filament while single-stranded (ss)DNA is stabiized in the filament's interior. The ATP-DnaA-oriC complex binds and stabilizes one strand of the AT-rich DNA unwinding element (DUE), permitting loading of DNA polymerase. After initiation quickly degrades to an ADP-DnaA complex that is not apt for DNA replication. Binds acidic phospholipids. The chain is Chromosomal replication initiator protein DnaA from Streptococcus pyogenes serotype M4 (strain MGAS10750).